Consider the following 202-residue polypeptide: Peptide methionine sulfoxide reductase B1, chloroplastic (202 aa).

The transit peptide at 1-63 (MASSTRLTII…SSSPKPDNVQ (63 aa)) directs the protein to the chloroplast. Positions 48-67 (YSMGSSSSSPKPDNVQEAEK) are disordered. Positions 75-197 (ENEWKKRLTP…NSAALKLNAL (123 aa)) constitute a MsrB domain. The Zn(2+) site is built by Cys114, Cys117, Cys163, and Cys166. The active-site Nucleophile is the Cys186.

This sequence belongs to the MsrB Met sulfoxide reductase family. Zn(2+) serves as cofactor. In terms of tissue distribution, expressed at low levels in stems, leaves, floral buds, flowers and siliques (at protein level).

It is found in the plastid. It localises to the chloroplast. It carries out the reaction L-methionyl-[protein] + [thioredoxin]-disulfide + H2O = L-methionyl-(R)-S-oxide-[protein] + [thioredoxin]-dithiol. Catalyzes the reduction of methionine sulfoxide (MetSO) to methionine in proteins. Specifically reduces the MetSO R-enantiomer. Plays a protective role against oxidative stress by restoring activity to proteins that have been inactivated by methionine oxidation. May play an essential function in association with MSRB2 in maintaining vegetative growth during environmental constraints, through the preservation of photosynthetic antennae. MSRB1 and MSRB2 account for most of the leaf peptide MSR capacity. The protein is Peptide methionine sulfoxide reductase B1, chloroplastic of Arabidopsis thaliana (Mouse-ear cress).